A 178-amino-acid polypeptide reads, in one-letter code: Large ribosomal subunit protein uL6 (178 aa).

It belongs to the universal ribosomal protein uL6 family. Part of the 50S ribosomal subunit.

This protein binds to the 23S rRNA, and is important in its secondary structure. It is located near the subunit interface in the base of the L7/L12 stalk, and near the tRNA binding site of the peptidyltransferase center. This is Large ribosomal subunit protein uL6 from Corynebacterium diphtheriae (strain ATCC 700971 / NCTC 13129 / Biotype gravis).